The chain runs to 339 residues: D-erythrose-4-phosphate dehydrogenase (339 aa).

An NAD(+)-binding site is contributed by 12–13 (RI). Substrate-binding positions include 154 to 156 (SCT), arginine 200, 213 to 214 (TK), and arginine 236. Cysteine 155 (nucleophile) is an active-site residue. Asparagine 318 contacts NAD(+).

This sequence belongs to the glyceraldehyde-3-phosphate dehydrogenase family. Epd subfamily. In terms of assembly, homotetramer.

It localises to the cytoplasm. It carries out the reaction D-erythrose 4-phosphate + NAD(+) + H2O = 4-phospho-D-erythronate + NADH + 2 H(+). Its pathway is cofactor biosynthesis; pyridoxine 5'-phosphate biosynthesis; pyridoxine 5'-phosphate from D-erythrose 4-phosphate: step 1/5. In terms of biological role, catalyzes the NAD-dependent conversion of D-erythrose 4-phosphate to 4-phosphoerythronate. The polypeptide is D-erythrose-4-phosphate dehydrogenase (Enterobacter sp. (strain 638)).